Consider the following 361-residue polypeptide: Peptide chain release factor 1 (361 aa).

Gln233 carries the N5-methylglutamine modification. Residues 282-310 (SKKQAERAQNRKSQVGSGDRSERIRTYNF) are disordered.

This sequence belongs to the prokaryotic/mitochondrial release factor family. Post-translationally, methylated by PrmC. Methylation increases the termination efficiency of RF1.

It is found in the cytoplasm. Peptide chain release factor 1 directs the termination of translation in response to the peptide chain termination codons UAG and UAA. In Treponema denticola (strain ATCC 35405 / DSM 14222 / CIP 103919 / JCM 8153 / KCTC 15104), this protein is Peptide chain release factor 1.